We begin with the raw amino-acid sequence, 218 residues long: MADSKAKPTKAANKTPPKSPGDPAKAAKRLSLESEGANEGAAAAPELSALEEAFRRFAVHGDTRATGKEMHGKNWSKLCKDCHVIDGKNVTVTDVDIVFSKIKGKSCRTITFEQFQEALEELAKKRFKDKSSEEAVREVHRLIEGRAPVISGVTKAVSSPTVSRLTDTSKFTGSHKERFDQSGKGKGKAGRVDLVDESGYVPGYKHAGTYDQKVQGGK.

The disordered stretch occupies residues 1-45 (MADSKAKPTKAANKTPPKSPGDPAKAAKRLSLESEGANEGAAAAP). The segment at 2-115 (ADSKAKPTKA…SCRTITFEQF (114 aa)) is mediates interaction with LIMK1. T15 carries the phosphothreonine modification. S19, S31, and S34 each carry phosphoserine. A compositionally biased stretch (low complexity) spans 33 to 45 (ESEGANEGAAAAP). Zn(2+)-binding residues include H60, H71, C79, and C82. Phosphothreonine is present on T91. Position 106 is a phosphoserine (S106). S151 carries an O-linked (GlcNAc) serine glycan. Phosphoserine occurs at positions 158 and 159. Residues 165-192 (LTDTSKFTGSHKERFDQSGKGKGKAGRV) are disordered. A compositionally biased stretch (basic and acidic residues) spans 174–183 (SHKERFDQSG).

Belongs to the TPPP family. As to quaternary structure, homodimer. Binds tubulin; binding is inhibited by GTP. Interacts with MAPK1. Interacts with GAPDH; the interaction is direct. Interacts with LIMK1 (via the PDZ domain); the interaction is direct. Interacts with LIMK2. Interacts with HDAC6; thereby inhibiting the tubulin deacetylase activity of HDAC6. Interacts with aggregated SNCA; may have a pro-aggregatory role in synucleinopathies. Interacts with DYNLL1. Interacts (via C-terminus) with S100A2, S100A6 and S100B; these interactions inhibit TPPP dimerization. Mg(2+) serves as cofactor. Post-translationally, phosphorylated by LIMK1 on serine residues; phosphorylation may alter the tubulin polymerization activity. Phosphorylation by LIMK2, but not LIMK1, regulates astral microtubule organization at early stage of mitosis. Phosphorylation by ROCK1 at Ser-31, Ser-106 and Ser-158 inhibits interaction with HDAC6, resulting in decreased acetylation of tubulin, increased cell motility and entry into S-phase. Phosphorylation by CDK1 inhibits the microtubule polymerizing activity. In terms of processing, degraded by the proteasome; zinc-binding inhibits degradation by the proteasome. In terms of tissue distribution, predominantly expressed in mature oligodendrocytes.

It is found in the golgi outpost. Its subcellular location is the cytoplasm. It localises to the cytoskeleton. The protein localises to the microtubule organizing center. The protein resides in the nucleus. It is found in the spindle. It catalyses the reaction GTP + H2O = GDP + phosphate + H(+). In terms of biological role, regulator of microtubule dynamics that plays a key role in myelination by promoting elongation of the myelin sheath. Acts as a microtubule nucleation factor in oligodendrocytes: specifically localizes to the postsynaptic Golgi apparatus region, also named Golgi outpost, and promotes microtubule nucleation, an important step for elongation of the myelin sheath. Required for both uniform polarized growth of distal microtubules as well as directing the branching of proximal processes. Shows magnesium-dependent GTPase activity; the role of the GTPase activity is unclear. In addition to microtubule nucleation activity, also involved in microtubule bundling and stabilization of existing microtubules, thereby maintaining the integrity of the microtubule network. Regulates microtubule dynamics by promoting tubulin acetylation: acts by inhibiting the tubulin deacetylase activity of HDAC6. Also regulates cell migration: phosphorylation by ROCK1 inhibits interaction with HDAC6, resulting in decreased acetylation of tubulin and increased cell motility. Plays a role in cell proliferation by regulating the G1/S-phase transition. Involved in astral microtubule organization and mitotic spindle orientation during early stage of mitosis; this process is regulated by phosphorylation by LIMK2. This is Tubulin polymerization-promoting protein from Rattus norvegicus (Rat).